Reading from the N-terminus, the 276-residue chain is Myoblast determination protein 1 homolog 1 (276 aa).

The bHLH domain maps to 84 to 135 (DRRKAATMRERRRLSKVNDAFETLKRCTSTNPNQRLPKVDILRNAISYIESL). Residues 228-253 (CPAVQDGSEGSSPCSPGDGSIASENG) are disordered.

In terms of assembly, efficient DNA binding requires dimerization with another bHLH protein.

Its subcellular location is the nucleus. Functionally, may act as a transcriptional activator that promotes transcription of muscle-specific target genes and plays a role in muscle differentiation. The protein is Myoblast determination protein 1 homolog 1 (myod1) of Oncorhynchus mykiss (Rainbow trout).